A 338-amino-acid chain; its full sequence is uncharacterized protein (338 aa).

A disordered region spans residues 1 to 72; that stretch reads MASPPILSRE…LNPVEDYDSK (72 aa). Positions 24–38 are enriched in polar residues; sequence GGNSEVNIDPSASSS. Residues 49–58 are compositionally biased toward basic and acidic residues; sequence ADTKIDPHLL. Over residues 59–68 the composition is skewed to acidic residues; sequence EEDDLNPVED.

It is found in the cytoplasm. It localises to the nucleus. This is an uncharacterized protein from Schizosaccharomyces pombe (strain 972 / ATCC 24843) (Fission yeast).